Consider the following 560-residue polypeptide: Interferon alpha/beta receptor 1 (560 aa).

The first 24 residues, 1–24 (MLGLLGATTLMLVAGAPWVLPAGG), serve as a signal peptide directing secretion. Residues 25–437 (ADLRSPENVV…EKTKPGSTSQ (413 aa)) are Extracellular-facing. Fibronectin type-III domains lie at 29-125 (SPEN…FQEA), 133-224 (HLEA…INTT), 231-329 (SPEN…TEMQ), and 333-433 (FPPV…TKPG). N-linked (GlcNAc...) asparagine glycosylation occurs at N55. The cysteines at positions 76 and 84 are disulfide-linked. 3 N-linked (GlcNAc...) asparagine glycosylation sites follow: N85, N108, and N172. C199 and C220 are disulfide-bonded. 3 N-linked (GlcNAc...) asparagine glycosylation sites follow: N222, N249, and N254. An intrachain disulfide couples C283 to C291. N-linked (GlcNAc...) asparagine glycosylation is found at N313, N377, and N417. A disulfide bridge connects residues C404 and C427. The chain crosses the membrane as a helical span at residues 438–458 (AWLIAGILSAILLFPAVFYGV). Topologically, residues 459–560 (KVVSRCINYV…GEEILRQAAV (102 aa)) are cytoplasmic. C464 carries the S-palmitoyl cysteine lipid modification. 2 positions are modified to phosphotyrosine; by TYK2: Y467 and Y482. The important for interaction with TYK2 stretch occupies residues 492 to 501 (LLSTSEEQTE). 2 positions are modified to phosphoserine: S496 and S536. The interval 520–560 (QIDDNHSRCSSQTNRDSGVYSNEDENSGSKIGEEILRQAAV) is disordered. Residues 527-539 (RCSSQTNRDSGVY) are compositionally biased toward polar residues. Basic and acidic residues predominate over residues 550–560 (IGEEILRQAAV).

Belongs to the type II cytokine receptor family. In terms of assembly, heterodimer with IFNAR2; forming the receptor for type I interferon. Interacts with TYK2. Interacts with STAT1 and STAT2; the interaction requires its phosphorylation at Tyr-482. Interacts (serine-phosphorylated form) with FBXW11, the substrate recognition component of a SCF (SKP1-CUL1-F-box protein) E3 ubiquitin-protein ligase complex. Interacts with SHMT2; this promotes interaction with ABRAXAS2 and the BRISC complex. Interacts with TRIM10; this interaction prevents association between IFNAR1 and TYK2. In terms of processing, ubiquitinated, leading to its internalization and degradation. Polyubiquitinated via 'Lys-48'-linked and 'Lys-63'-linked ubiquitin chains, leading to receptor internalization and lysosomal degradation. The 'Lys-63'-linked ubiquitin chains are cleaved off by the BRISC complex. Phosphorylated on tyrosine residues in response to interferon-binding: phosphorylation by TYK2 tyrosine kinase creates docking sites for STAT proteins. Phosphorylated on serine residues in response to interferon binding; this promotes interaction with FBXW11 and ubiquitination. Post-translationally, palmitoylation at Cys-464 is required for the activation of STAT1 and STAT2.

It is found in the cell membrane. The protein localises to the late endosome. It localises to the lysosome. Functionally, together with IFNAR2, forms the heterodimeric receptor for type I interferons (including interferons alpha, beta, epsilon, omega and kappa). Type I interferon binding activates the JAK-STAT signaling cascade, resulting in transcriptional activation or repression of interferon-regulated genes that encode the effectors of the interferon response. Mechanistically, type I interferon-binding brings the IFNAR1 and IFNAR2 subunits into close proximity with one another, driving their associated Janus kinases (JAKs) (TYK2 bound to IFNAR1 and JAK1 bound to IFNAR2) to cross-phosphorylate one another. The activated kinases phosphorylate specific tyrosine residues on the intracellular domains of IFNAR1 and IFNAR2, forming docking sites for the STAT transcription factors. STAT proteins are then phosphorylated by the JAKs, promoting their translocation into the nucleus to regulate expression of interferon-regulated genes. Can also act independently of IFNAR2: form an active IFNB1 receptor by itself and activate a signaling cascade that does not involve activation of the JAK-STAT pathway. The sequence is that of Interferon alpha/beta receptor 1 (IFNAR1) from Sus scrofa (Pig).